We begin with the raw amino-acid sequence, 301 residues long: Aspartate carbamoyltransferase catalytic subunit (301 aa).

Arg-54 and Thr-55 together coordinate carbamoyl phosphate. Lys-82 serves as a coordination point for L-aspartate. Carbamoyl phosphate contacts are provided by Arg-104, His-132, and Gln-135. Positions 165 and 217 each coordinate L-aspartate. Residues Gly-257 and Pro-258 each coordinate carbamoyl phosphate.

The protein belongs to the aspartate/ornithine carbamoyltransferase superfamily. ATCase family. Heterododecamer (2C3:3R2) of six catalytic PyrB chains organized as two trimers (C3), and six regulatory PyrI chains organized as three dimers (R2).

It catalyses the reaction carbamoyl phosphate + L-aspartate = N-carbamoyl-L-aspartate + phosphate + H(+). It participates in pyrimidine metabolism; UMP biosynthesis via de novo pathway; (S)-dihydroorotate from bicarbonate: step 2/3. Catalyzes the condensation of carbamoyl phosphate and aspartate to form carbamoyl aspartate and inorganic phosphate, the committed step in the de novo pyrimidine nucleotide biosynthesis pathway. The polypeptide is Aspartate carbamoyltransferase catalytic subunit (Thermus aquaticus).